The sequence spans 149 residues: Acyl carrier protein 1, chloroplastic (149 aa).

A chloroplast-targeting transit peptide spans M1–C59. One can recognise a Carrier domain in the interval K69–V144. S104 carries the O-(pantetheine 4'-phosphoryl)serine modification.

It belongs to the acyl carrier protein (ACP) family. Post-translationally, 4'-phosphopantetheine is transferred from CoA to a specific serine of apo-ACP by acpS. This modification is essential for activity because fatty acids are bound in thioester linkage to the sulfhydryl of the prosthetic group.

The protein resides in the plastid. It localises to the chloroplast. It participates in lipid metabolism; fatty acid biosynthesis. Carrier of the growing fatty acid chain in fatty acid biosynthesis. This is Acyl carrier protein 1, chloroplastic (ACL1.1) from Hordeum vulgare (Barley).